Reading from the N-terminus, the 126-residue chain is Fluoride-specific ion channel FluC (126 aa).

A run of 4 helical transmembrane segments spans residues 3–23 (PYLL…RFLI), 37–57 (VGTL…ALYF), 68–88 (LVIT…LETV), and 101–121 (TNIT…MMLF). 2 residues coordinate Na(+): Gly75 and Thr78.

The protein belongs to the fluoride channel Fluc/FEX (TC 1.A.43) family.

The protein resides in the cell inner membrane. The catalysed reaction is fluoride(in) = fluoride(out). Na(+) is not transported, but it plays an essential structural role and its presence is essential for fluoride channel function. Its function is as follows. Fluoride-specific ion channel. Important for reducing fluoride concentration in the cell, thus reducing its toxicity. The chain is Fluoride-specific ion channel FluC from Sulfurovum sp. (strain NBC37-1).